A 522-amino-acid chain; its full sequence is DEAD-box ATP-dependent RNA helicase 1 (522 aa).

The short motif at 30 to 59 (CALDTLPCLNPKLKKALENMGISSLFPVQV) is the Q motif element. One can recognise a Helicase ATP-binding domain in the interval 66 to 297 (IGPGGFERDI…QLDLHHPLFM (232 aa)). Residue 79–86 (SPTGSGKT) coordinates ATP. The DEAD box signature appears at 207–210 (DETD). Residues 325–475 (YLVALLKSWE…PIPPTSLDSI (151 aa)) form the Helicase C-terminal domain. The tract at residues 490–522 (VESEAPKKGRQAFRHNSRTGNSQTKLNKPRSEA) is disordered. Positions 497-506 (KGRQAFRHNS) are enriched in basic residues.

The protein belongs to the DEAD box helicase family. DDX51/DBP6 subfamily.

It catalyses the reaction ATP + H2O = ADP + phosphate + H(+). This chain is DEAD-box ATP-dependent RNA helicase 1 (RH1), found in Arabidopsis thaliana (Mouse-ear cress).